The primary structure comprises 889 residues: F-BAR domain only protein 1 (889 aa).

Residues 1–248 form the F-BAR domain; sequence MSYFGEHFWG…NIENVSVEML (248 aa). A mediates membrane-binding region spans residues 1 to 275; the sequence is MSYFGEHFWG…LDFEAYSAAA (275 aa). A coiled-coil region spans residues 156-195; that stretch reads TSQKEMDKAETKTKKAAESLRRSVEKYNSARADFEQKMLD. Residues 267 to 442 form a mediates interaction with the adaptor protein complex AP-2 region; the sequence is DFEAYSAAAL…KNLFGPPLES (176 aa). Positions 294–352 are disordered; sequence LSRREREPEPPAAVDFLEPDSGTCPEVDEEGFTVRPDVTQNSTAEPSRFSSSDSDFDDE. A phosphoserine mark is found at Ser-295, Ser-347, and Ser-372. The interval 382 to 596 is disordered; sequence ATAGSLILPP…SPLGSSAAST (215 aa). The segment covering 450–469 has biased composition (low complexity); that stretch reads TGSSSLGFTSSPSPFSSSSP. Positions 496 to 511 are enriched in pro residues; it reads PGTPQSPPSCRAPPPE. The residue at position 530 (Ser-530) is a Phosphoserine. A compositionally biased stretch (low complexity) spans 580 to 596; sequence LSRSLSPSPLGSSAAST. A mediates interaction with AGFG1, CALM, DAB2, EPS15, EPS15R, ITSN1 and clathrin region spans residues 609-889; that stretch reads HGVSRGPSPV…FATGMYLVSC (281 aa). Phosphoserine is present on Ser-616. Residues 625 to 888 form the MHD domain; sequence ALPIATAFTE…RFATGMYLVS (264 aa). Residues 826 to 849 form a disordered region; it reads AGGSGRLSASWEPLSGPSTPSPVA.

This sequence belongs to the FCHO family. May oligomerize and form homotetramer. Interacts with AP2A2 and AP2B1; 2 subunits of the adaptor protein complex AP-2. Interacts with DAB2. Interacts with clathrin (CLTC or CLTCL1). Interacts with EPS15, EPS15R and ITSN1. Interacts with AGFG1 and CALM. May interact with ACVR1; linking this receptor to clathrin-mediated endocytosis. In terms of tissue distribution, predominantly expressed in lymphoid cells.

The protein resides in the membrane. It localises to the clathrin-coated pit. Functions in an early step of clathrin-mediated endocytosis. Has both a membrane binding/bending activity and the ability to recruit proteins essential to the formation of functional clathrin-coated pits. May regulate Bmp signaling by regulating clathrin-mediated endocytosis of Bmp receptors. Involved in the regulation of T-cell poliferation and activation. Affects TCR clustering upon receptor triggering and modulates its internalisation, playing a role in TCR-dependent T-cell activation. This chain is F-BAR domain only protein 1, found in Homo sapiens (Human).